Consider the following 210-residue polypeptide: uncharacterized protein (210 aa).

It to E.coli YkgK.

This is an uncharacterized protein from Escherichia coli (strain K12).